A 290-amino-acid polypeptide reads, in one-letter code: 33 kDa chaperonin (290 aa).

2 disulfide bridges follow: cysteine 235-cysteine 237 and cysteine 268-cysteine 271.

The protein belongs to the HSP33 family. Post-translationally, under oxidizing conditions two disulfide bonds are formed involving the reactive cysteines. Under reducing conditions zinc is bound to the reactive cysteines and the protein is inactive.

It is found in the cytoplasm. Its function is as follows. Redox regulated molecular chaperone. Protects both thermally unfolding and oxidatively damaged proteins from irreversible aggregation. Plays an important role in the bacterial defense system toward oxidative stress. This is 33 kDa chaperonin from Streptococcus mutans serotype c (strain ATCC 700610 / UA159).